The primary structure comprises 143 residues: Peptide methionine sulfoxide reductase MsrB (143 aa).

Positions 16-139 (DAELRRRLTP…NSAALNFESR (124 aa)) constitute a MsrB domain. Cysteine 55, cysteine 58, cysteine 104, and cysteine 107 together coordinate Zn(2+). Cysteine 128 serves as the catalytic Nucleophile.

Belongs to the MsrB Met sulfoxide reductase family. Requires Zn(2+) as cofactor.

It catalyses the reaction L-methionyl-[protein] + [thioredoxin]-disulfide + H2O = L-methionyl-(R)-S-oxide-[protein] + [thioredoxin]-dithiol. The sequence is that of Peptide methionine sulfoxide reductase MsrB from Burkholderia ambifaria (strain ATCC BAA-244 / DSM 16087 / CCUG 44356 / LMG 19182 / AMMD) (Burkholderia cepacia (strain AMMD)).